Consider the following 530-residue polypeptide: Phosphoenolpyruvate carboxykinase (ATP) (530 aa).

The substrate site is built by arginine 59, tyrosine 198, and lysine 204. ATP contacts are provided by residues lysine 204, histidine 223, and 239–247; that span reads GLSGTGKTT. Mn(2+) contacts are provided by lysine 204 and histidine 223. A Mn(2+)-binding site is contributed by aspartate 260. Residues glutamate 288, arginine 325, 440–441, and threonine 446 contribute to the ATP site; that span reads RI. A substrate-binding site is contributed by arginine 325.

Belongs to the phosphoenolpyruvate carboxykinase (ATP) family. Mn(2+) serves as cofactor.

It localises to the cytoplasm. The enzyme catalyses oxaloacetate + ATP = phosphoenolpyruvate + ADP + CO2. It participates in carbohydrate biosynthesis; gluconeogenesis. Functionally, involved in the gluconeogenesis. Catalyzes the conversion of oxaloacetate (OAA) to phosphoenolpyruvate (PEP) through direct phosphoryl transfer between the nucleoside triphosphate and OAA. The sequence is that of Phosphoenolpyruvate carboxykinase (ATP) from Azobacteroides pseudotrichonymphae genomovar. CFP2.